Consider the following 291-residue polypeptide: Shikimate dehydrogenase (NADP(+)) (291 aa).

Shikimate contacts are provided by residues 22–24 (SLS) and threonine 69. Lysine 73 functions as the Proton acceptor in the catalytic mechanism. Positions 94 and 110 each coordinate shikimate. NADP(+)-binding positions include 131–135 (GSGGA) and leucine 226. Tyrosine 228 is a binding site for shikimate. Glycine 249 contacts NADP(+).

This sequence belongs to the shikimate dehydrogenase family. In terms of assembly, homodimer.

The enzyme catalyses shikimate + NADP(+) = 3-dehydroshikimate + NADPH + H(+). Its pathway is metabolic intermediate biosynthesis; chorismate biosynthesis; chorismate from D-erythrose 4-phosphate and phosphoenolpyruvate: step 4/7. In terms of biological role, involved in the biosynthesis of the chorismate, which leads to the biosynthesis of aromatic amino acids. Catalyzes the reversible NADPH linked reduction of 3-dehydroshikimate (DHSA) to yield shikimate (SA). The polypeptide is Shikimate dehydrogenase (NADP(+)) (Synechococcus sp. (strain JA-3-3Ab) (Cyanobacteria bacterium Yellowstone A-Prime)).